We begin with the raw amino-acid sequence, 572 residues long: Dihydroxy-acid dehydratase (572 aa).

Residue Cys-57 coordinates [2Fe-2S] cluster. Residue Asp-89 participates in Mg(2+) binding. Cys-130 is a binding site for [2Fe-2S] cluster. Mg(2+) is bound by residues Asp-131 and Lys-132. At Lys-132 the chain carries N6-carboxylysine. [2Fe-2S] cluster is bound at residue Cys-202. Position 453 (Glu-453) interacts with Mg(2+). Ser-479 functions as the Proton acceptor in the catalytic mechanism.

This sequence belongs to the IlvD/Edd family. As to quaternary structure, homodimer. The cofactor is [2Fe-2S] cluster. Mg(2+) serves as cofactor.

The catalysed reaction is (2R)-2,3-dihydroxy-3-methylbutanoate = 3-methyl-2-oxobutanoate + H2O. It carries out the reaction (2R,3R)-2,3-dihydroxy-3-methylpentanoate = (S)-3-methyl-2-oxopentanoate + H2O. The protein operates within amino-acid biosynthesis; L-isoleucine biosynthesis; L-isoleucine from 2-oxobutanoate: step 3/4. It functions in the pathway amino-acid biosynthesis; L-valine biosynthesis; L-valine from pyruvate: step 3/4. Its function is as follows. Functions in the biosynthesis of branched-chain amino acids. Catalyzes the dehydration of (2R,3R)-2,3-dihydroxy-3-methylpentanoate (2,3-dihydroxy-3-methylvalerate) into 2-oxo-3-methylpentanoate (2-oxo-3-methylvalerate) and of (2R)-2,3-dihydroxy-3-methylbutanoate (2,3-dihydroxyisovalerate) into 2-oxo-3-methylbutanoate (2-oxoisovalerate), the penultimate precursor to L-isoleucine and L-valine, respectively. In Streptococcus sanguinis (strain SK36), this protein is Dihydroxy-acid dehydratase.